The following is a 443-amino-acid chain: Glutamyl-tRNA reductase (443 aa).

Substrate is bound by residues 49–52 (TCNR), Ser109, 114–116 (EQQ), and Gln120. The Nucleophile role is filled by Cys50. 189-194 (GAGSMG) provides a ligand contact to NADP(+).

Belongs to the glutamyl-tRNA reductase family. As to quaternary structure, homodimer.

The catalysed reaction is (S)-4-amino-5-oxopentanoate + tRNA(Glu) + NADP(+) = L-glutamyl-tRNA(Glu) + NADPH + H(+). It functions in the pathway porphyrin-containing compound metabolism; protoporphyrin-IX biosynthesis; 5-aminolevulinate from L-glutamyl-tRNA(Glu): step 1/2. Catalyzes the NADPH-dependent reduction of glutamyl-tRNA(Glu) to glutamate 1-semialdehyde (GSA). This is Glutamyl-tRNA reductase from Mycobacteroides abscessus (strain ATCC 19977 / DSM 44196 / CCUG 20993 / CIP 104536 / JCM 13569 / NCTC 13031 / TMC 1543 / L948) (Mycobacterium abscessus).